The primary structure comprises 212 residues: Thiamine-phosphate synthase (212 aa).

4-amino-2-methyl-5-(diphosphooxymethyl)pyrimidine contacts are provided by residues 41–45 and aspartate 76; that span reads QYREK. Residues aspartate 77 and aspartate 96 each coordinate Mg(2+). Serine 114 provides a ligand contact to 4-amino-2-methyl-5-(diphosphooxymethyl)pyrimidine. 141–143 is a binding site for 2-[(2R,5Z)-2-carboxy-4-methylthiazol-5(2H)-ylidene]ethyl phosphate; sequence TTS. 4-amino-2-methyl-5-(diphosphooxymethyl)pyrimidine is bound at residue lysine 144. 2-[(2R,5Z)-2-carboxy-4-methylthiazol-5(2H)-ylidene]ethyl phosphate is bound by residues glycine 172 and 192–193; that span reads IS.

It belongs to the thiamine-phosphate synthase family. Mg(2+) is required as a cofactor.

The catalysed reaction is 2-[(2R,5Z)-2-carboxy-4-methylthiazol-5(2H)-ylidene]ethyl phosphate + 4-amino-2-methyl-5-(diphosphooxymethyl)pyrimidine + 2 H(+) = thiamine phosphate + CO2 + diphosphate. It catalyses the reaction 2-(2-carboxy-4-methylthiazol-5-yl)ethyl phosphate + 4-amino-2-methyl-5-(diphosphooxymethyl)pyrimidine + 2 H(+) = thiamine phosphate + CO2 + diphosphate. The enzyme catalyses 4-methyl-5-(2-phosphooxyethyl)-thiazole + 4-amino-2-methyl-5-(diphosphooxymethyl)pyrimidine + H(+) = thiamine phosphate + diphosphate. The protein operates within cofactor biosynthesis; thiamine diphosphate biosynthesis; thiamine phosphate from 4-amino-2-methyl-5-diphosphomethylpyrimidine and 4-methyl-5-(2-phosphoethyl)-thiazole: step 1/1. Its function is as follows. Condenses 4-methyl-5-(beta-hydroxyethyl)thiazole monophosphate (THZ-P) and 2-methyl-4-amino-5-hydroxymethyl pyrimidine pyrophosphate (HMP-PP) to form thiamine monophosphate (TMP). In Leuconostoc citreum (strain KM20), this protein is Thiamine-phosphate synthase.